The primary structure comprises 630 residues: Pro-interleukin-16 (630 aa).

2 disordered regions span residues 30–268 and 316–343; these read ENPG…FPLT and PKEGASPTSSSNEDSAANGSAETSASDT. The segment covering 129-143 has biased composition (low complexity); that stretch reads IRASSSSSIKQRISS. Ser220 bears the Phosphoserine mark. Positions 321–343 are enriched in polar residues; that stretch reads SPTSSSNEDSAANGSAETSASDT. Residues 404-500 are interaction with PPP1R12A, PPP1R12B and PPP1R12C; it reads KQLDSIHVTI…IVTRKLTAES (97 aa). 2 consecutive PDZ domains span residues 410 to 495 and 532 to 617; these read HVTI…VTRK and TVTL…IRRK.

As to quaternary structure, homotetramer. Pro-interleukin-16 interacts (via PDZ 2 domain) with PPP1R12A, PPP1R12B and PPP1R12C. Pro-interleukin-16 interacts with GRIN2A. Pro-interleukin-16 interacts with GABPB1. Pro-interleukin-16 interacts (via PDZ 3 domain) with HDAC3.

It is found in the secreted. Its subcellular location is the cytoplasm. The protein localises to the nucleus. Interleukin-16 stimulates a migratory response in CD4+ lymphocytes, monocytes, and eosinophils. Primes CD4+ T-cells for IL-2 and IL-15 responsiveness. Also induces T-lymphocyte expression of interleukin 2 receptor. Ligand for CD4. In terms of biological role, pro-interleukin-16 is involved in cell cycle progression in T-cells. Appears to be involved in transcriptional regulation of SKP2 and is probably part of a transcriptional repression complex on the core promoter of the SKP2 gene. May act as a scaffold for GABPB1 (the DNA-binding subunit the GABP transcription factor complex) and HDAC3 thus maintaining transcriptional repression and blocking cell cycle progression in resting T-cells. This Macaca mulatta (Rhesus macaque) protein is Pro-interleukin-16 (IL16).